Here is a 205-residue protein sequence, read N- to C-terminus: Small ribosomal subunit protein uS4 (205 aa).

A compositionally biased stretch (basic and acidic residues) spans 1–16 (MSKRESAKHKIDRRLG). The segment at 1-46 (MSKRESAKHKIDRRLGENIWGRPKSPVNRREYGPGQHGQRRKGKLS) is disordered. Residues 94–157 (SRLDAVVYRA…KQLAIVLEAV (64 aa)) form the S4 RNA-binding domain.

Belongs to the universal ribosomal protein uS4 family. Part of the 30S ribosomal subunit. Contacts protein S5. The interaction surface between S4 and S5 is involved in control of translational fidelity.

Functionally, one of the primary rRNA binding proteins, it binds directly to 16S rRNA where it nucleates assembly of the body of the 30S subunit. In terms of biological role, with S5 and S12 plays an important role in translational accuracy. The sequence is that of Small ribosomal subunit protein uS4 from Brucella abortus (strain S19).